The sequence spans 288 residues: 4-hydroxybenzoate octaprenyltransferase (288 aa).

8 helical membrane passes run 23–43, 46–66, 98–118, 141–161, 163–183, 213–233, 234–254, and 268–288; these read IGSL…GRGI, AKIL…GCVV, ILFV…NSMT, LPQV…FAAV, ESLP…TVAY, LIIG…GWLM, NLGG…THQQ, and AFLN…ISYW.

This sequence belongs to the UbiA prenyltransferase family. Mg(2+) is required as a cofactor.

It is found in the cell inner membrane. It carries out the reaction all-trans-octaprenyl diphosphate + 4-hydroxybenzoate = 4-hydroxy-3-(all-trans-octaprenyl)benzoate + diphosphate. It functions in the pathway cofactor biosynthesis; ubiquinone biosynthesis. Functionally, catalyzes the prenylation of para-hydroxybenzoate (PHB) with an all-trans polyprenyl group. Mediates the second step in the final reaction sequence of ubiquinone-8 (UQ-8) biosynthesis, which is the condensation of the polyisoprenoid side chain with PHB, generating the first membrane-bound Q intermediate 3-octaprenyl-4-hydroxybenzoate. The polypeptide is 4-hydroxybenzoate octaprenyltransferase (Yersinia pestis bv. Antiqua (strain Antiqua)).